The primary structure comprises 1049 residues: Exotoxin PaxA (1049 aa).

Transmembrane regions (helical) follow at residues 246–266 (GLGLDIISSLLSGVTASFTLA), 311–331 (GPAAALIASSISLAISPLSFL), 375–395 (ITTISTALSAIAAGTAAASAG), and 397–417 (LVGAPITLLVTGITGLISGIL). 6 Hemolysin-type calcium-binding repeats span residues 744–761 (KGSKFRDIFHGADGDDLL), 762–779 (NGNDGDDILYGDKGNDEL), 780–797 (RGDNGNDQLYGGEGNDKL), 798–815 (FGGNGNNYLSGGDGDDEL), 826–843 (RGGKGNDKLYGGAGSDFL), and 844–861 (DGGEGDDYLAGGEGNDFY).

Belongs to the RTX prokaryotic toxin (TC 1.C.11) family.

The protein resides in the secreted. It is found in the host cell membrane. Functionally, paxA is associated with abortion cases in swine and septicemia in young piglets. Shows cohemolytic activity with the sphingomyelinase of S.aureus but is devoid of direct hemolytic activity. The chain is Exotoxin PaxA (paxA) from Pasteurella aerogenes.